Reading from the N-terminus, the 309-residue chain is Heme-dependent oxidative N-demethylase beta subunit (309 aa).

One can recognise an FAD-binding FR-type domain in the interval 2–103; the sequence is STLLDVRVAA…SPPANLFPLH (102 aa). In terms of domain architecture, 2Fe-2S ferredoxin-type spans 226–309; it reads FRVELARSGQ…GCGSPILLDL (84 aa). [2Fe-2S] cluster is bound by residues cysteine 260, cysteine 265, cysteine 268, and cysteine 296.

This sequence belongs to the PDR/VanB family. The heme-dependent oxidative N-demethylase (HODM) is a heterotetramer composed of a catalytic alpha subunit, a FMN/2Fe-2S-dependent oxidoreductase beta subunit, a gamma subunit with putative aminotransferase activity, and a delta subunit of unknown function. [2Fe-2S] cluster serves as cofactor. It depends on FMN as a cofactor.

Functionally, component of the heme-dependent oxidative N-demethylase (HODM) enzyme, that catalyzes the NADPH-dependent oxidation of dimethylamine (DMA) to methylamine (MA) and formaldehyde. Functions in bacterial methylated amine catabolism, linking alkylamine oxidation to the tetrahydrofolate C1 pool. The beta subunit of HODM binds FMN and a 2Fe-2S cluster, and likely reduces the ferric heme iron of the alpha subunit to ferrous using NADPH. This Ectopseudomonas mendocina (strain ymp) (Pseudomonas mendocina) protein is Heme-dependent oxidative N-demethylase beta subunit.